The primary structure comprises 368 residues: S-adenosylmethionine decarboxylase proenzyme 1 (368 aa).

Active-site residues include Glu9 and Arg12. Ser69 functions as the Schiff-base intermediate with substrate; via pyruvic acid in the catalytic mechanism. Pyruvic acid (Ser); by autocatalysis is present on Ser69. Cys83 serves as the catalytic Proton donor; for catalytic activity. Catalysis depends on proton acceptor; for processing activity residues Ser234 and His247.

Belongs to the eukaryotic AdoMetDC family. Pyruvate serves as cofactor. Is synthesized initially as an inactive proenzyme. Formation of the active enzyme involves a self-maturation process in which the active site pyruvoyl group is generated from an internal serine residue via an autocatalytic post-translational modification. Two non-identical subunits are generated from the proenzyme in this reaction, and the pyruvate is formed at the N-terminus of the alpha chain, which is derived from the carboxyl end of the proenzyme. The post-translation cleavage follows an unusual pathway, termed non-hydrolytic serinolysis, in which the side chain hydroxyl group of the serine supplies its oxygen atom to form the C-terminus of the beta chain, while the remainder of the serine residue undergoes an oxidative deamination to produce ammonia and the pyruvoyl group blocking the N-terminus of the alpha chain.

The catalysed reaction is S-adenosyl-L-methionine + H(+) = S-adenosyl 3-(methylsulfanyl)propylamine + CO2. Its pathway is amine and polyamine biosynthesis; S-adenosylmethioninamine biosynthesis; S-adenosylmethioninamine from S-adenosyl-L-methionine: step 1/1. The protein is S-adenosylmethionine decarboxylase proenzyme 1 (SAMDC1) of Brassica juncea (Indian mustard).